A 200-amino-acid chain; its full sequence is Recombination protein RecR (200 aa).

A C4-type zinc finger spans residues 58–73 (CQKCHNISDTTLCSIC). The Toprim domain maps to 81–176 (GLICVVENIQ…KLSNIARGVA (96 aa)).

It belongs to the RecR family.

Its function is as follows. May play a role in DNA repair. It seems to be involved in an RecBC-independent recombinational process of DNA repair. It may act with RecF and RecO. This is Recombination protein RecR from Amoebophilus asiaticus (strain 5a2).